Here is a 138-residue protein sequence, read N- to C-terminus: Transposon Tn10 TetD protein (138 aa).

The region spanning 31–129 (KDVLLWIEHN…KVTPSYYRRN (99 aa)) is the HTH araC/xylS-type domain. 2 consecutive DNA-binding regions (H-T-H motif) follow at residues 48–69 (DDVANKAGYTKWYFQRLFKKVT) and 96–119 (ILEIALKYQFDSQQSFTRRFKYIF).

This Escherichia coli protein is Transposon Tn10 TetD protein (tetD).